We begin with the raw amino-acid sequence, 170 residues long: MDLKSLIRDIPDFPKPGILFRDITTLLQNPDGLRYVIDQFTEDYREQSIDYVVGIESRGFIFGAPLAYQLGAGFVPVRKPGKLPAAIHAQEYELEYGTDRLEIHQDACPAGSRVLVVDDLLATGGTAAATAQLLAPLNCTLVGFGFIIELTGLAGRQKLPDCHINALVEY.

Belongs to the purine/pyrimidine phosphoribosyltransferase family. In terms of assembly, homodimer.

It localises to the cytoplasm. The enzyme catalyses AMP + diphosphate = 5-phospho-alpha-D-ribose 1-diphosphate + adenine. It functions in the pathway purine metabolism; AMP biosynthesis via salvage pathway; AMP from adenine: step 1/1. Its function is as follows. Catalyzes a salvage reaction resulting in the formation of AMP, that is energically less costly than de novo synthesis. This chain is Adenine phosphoribosyltransferase, found in Acaryochloris marina (strain MBIC 11017).